The primary structure comprises 233 residues: Large ribosomal subunit protein uL1 (233 aa).

The protein belongs to the universal ribosomal protein uL1 family. Part of the 50S ribosomal subunit.

Binds directly to 23S rRNA. The L1 stalk is quite mobile in the ribosome, and is involved in E site tRNA release. Its function is as follows. Protein L1 is also a translational repressor protein, it controls the translation of the L11 operon by binding to its mRNA. This is Large ribosomal subunit protein uL1 from Shewanella halifaxensis (strain HAW-EB4).